We begin with the raw amino-acid sequence, 742 residues long: uncharacterized protein (742 aa).

Residues 167–471 (GIVPPEPWGH…AAGAAGGGGA (305 aa)) are disordered. Positions 205–218 (PAPPPSLFAPPPPS) are enriched in pro residues. 2 stretches are compositionally biased toward polar residues: residues 318 to 331 (SPAT…NAVS) and 358 to 368 (GSPQTLSTAPS). Residues 386 to 401 (TAGPAAPPTTGGPPAP) are compositionally biased toward pro residues. Low complexity predominate over residues 421–432 (PLSGGVPGGAVP). A compositionally biased stretch (pro residues) spans 433–447 (LGPPPTPPPAAPVTT). The span at 448 to 464 (PPLASGAPVAPTGAAAG) shows a compositional bias: low complexity.

May be involved in the ESX-1 / type VII specialized secretion system (T7SS), which exports several proteins including EsxA and EsxB. Involved in DNA conjugation in the recipient strain. This is an uncharacterized protein from Mycolicibacterium smegmatis (strain MKD8) (Mycobacterium smegmatis).